The primary structure comprises 228 residues: Transcription factor zip-11 (228 aa).

The basic motif stretch occupies residues 166-202 (RKRQQNKVAAARYRDKQKAKWQDLLDQLEAEEDRNQR). The 59-residue stretch at 166 to 224 (RKRQQNKVAAARYRDKQKAKWQDLLDQLEAEEDRNQRLKLQAGHLEKEVAEMRQAFLAK) folds into the bZIP domain. The segment at 203-210 (LKLQAGHL) is leucine-zipper.

Belongs to the bZIP family. In terms of assembly, interacts with CCAAT/enhancer-binding protein cebp-2.

Its subcellular location is the nucleus. Its function is as follows. Transcription factor. Involved in modulating innate immune response pathways, acting to promote resistance against infection by Gram-negative bacterium P.aeruginosa strain PA14. May act as part of a feedback regulatory loop with the pmk-1/p38 MAPK pathway. May also function in concert with CCAAT/enhancer-binding protein cebp-2 to mediate immune responses, independently of the pmk-1/p38 MAPK pathway. In Caenorhabditis elegans, this protein is Transcription factor zip-11.